Reading from the N-terminus, the 718-residue chain is Acetolactate synthase, mitochondrial (718 aa).

Disordered stretches follow at residues 1 to 50 (MLTR…APVY) and 72 to 101 (RKIQ…APQP). The span at 32–45 (RYSNNIHTSSTQNA) shows a compositional bias: polar residues. The segment covering 76-99 (SSASTAAASPAVRPQPAQHFQAAP) has biased composition (low complexity). A thiamine diphosphate-binding site is contributed by Glu173. Arg275 lines the FAD pocket. Positions 296-327 (IPAKSAQPGHSPYLPSNPLNPSSQPSDPLPGD) are disordered. Over residues 306–325 (SPYLPSNPLNPSSQPSDPLP) the composition is skewed to low complexity. FAD-binding positions include 397–418 (HGSA…LGVR) and 449–468 (EIQP…VLGD). Positions 541-621 (QHQMWACQYY…VKVLLFNNEF (81 aa)) are thiamine pyrophosphate binding. Asp592 and Asn619 together coordinate Mg(2+).

Belongs to the TPP enzyme family. Mg(2+) is required as a cofactor. The cofactor is thiamine diphosphate.

It is found in the mitochondrion. The catalysed reaction is 2 pyruvate + H(+) = (2S)-2-acetolactate + CO2. It functions in the pathway amino-acid biosynthesis; L-isoleucine biosynthesis; L-isoleucine from 2-oxobutanoate: step 1/4. The protein operates within amino-acid biosynthesis; L-valine biosynthesis; L-valine from pyruvate: step 1/4. The chain is Acetolactate synthase, mitochondrial (ILV2) from Cryptococcus neoformans var. neoformans serotype D (strain JEC21 / ATCC MYA-565) (Filobasidiella neoformans).